The following is a 699-amino-acid chain: MRKVLLIASIVALILALFSCANPSFEPRSKAKDLASLPEIKSQGYHILFGELRDGEYTEGKILVGYNDRSEVDKIVKAVNGKVVLELPQIKVVSIKLNGMTVKQAYDKIKALALKGIRYVEPSYKRELIKPTVVKPNPDMYKIRKPGLNSTARDYGEELSNELWGLEAIGVTQQLWEEASGTNIIVAVVDTGVDGTHPDLEGQVIAGYRPAFDEELPAGTDSSYGGSHGTHVAGTIAAKKDGKGIVGVAPGAKIMPIVIFDDPALVGGNGYVGDDYVAAGIIWATDHGAKVMNHSWGGWGYSYTMKEAFDYAMEHGVVMVVSAGNNTSDSHHQYPAGYPGVIQVAALDYYGGTFRVAGFSSRSDGVSVGAPGVTILSTVPGEDSIGYEGHNENVPATNGGTYDYYQGTSMAAPHVTGVVAVLLQKFPNAKPWQIRKLLENTAFDFNGNGWDHDTGYGLVKLDAALQGPLPTQGGVEEFQVVVTDAKGNFGVPTVFVSMMRDNGSCYYAKTGPDGIARFPHIDSGTYDIFVGGPDHWDRALAPYDGESIPGGYAIALRMAEERQASFVGFGVSPDATQLNVNFNSTLQVKFSTNLSTLKDPQFVVVDPLLRGVYGRVAYARNQTYDLSLLSGQISFGIQTLLPAATDITIQGTVTLNGEDIPVYGVLKAGTTWTIIDDFGGLNLGTDSQPIYVWWTIFGQ.

The N-terminal stretch at 1-21 (MRKVLLIASIVALILALFSCA) is a signal peptide. Residues 22–149 (NPSFEPRSKA…MYKIRKPGLN (128 aa)) constitute a propeptide that is removed on maturation. E157 contacts Ca(2+). Residues 163–465 (LWGLEAIGVT…YGLVKLDAAL (303 aa)) form the Peptidase S8 domain. D190 functions as the Charge relay system in the catalytic mechanism. D199 is a Ca(2+) binding site. H228 serves as the catalytic Charge relay system. Residues K239, D241, K243, and I245 each coordinate Ca(2+). S409 (charge relay system) is an active-site residue.

The protein belongs to the peptidase S8 family. Post-translationally, undergoes auto-proteolytic processing. Once cleaved, the propeptide can remain associated with the protease and blocks its activity. The physiological activation of fervidolysin is proposed to be achieved through the stepwise removal of the propeptide accomplished by several proteolytic cleavages that may not be autolytic.

It is found in the cell surface. Is inhibited by phenylmethylsulfonyl fluoride and 3,4-dichloroisocoumarin. EDTA and iodoacetate (1 to 5 mM) have only little effect on the enzyme activity. Functionally, protease able to degrade keratin into peptides. Is responsible for keratinolysis by F.pennivorans, which allows this bacterium to grow on native feathers. The polypeptide is Fervidolysin (Fervidobacterium pennivorans).